We begin with the raw amino-acid sequence, 149 residues long: Transcriptional repressor NrdR (149 aa).

The segment at 3-34 (CPFCSAVDTKVIDSRLVGEGSQVRRRRQCLVC) is a zinc-finger region. The 91-residue stretch at 49 to 139 (PRVIKSNEVR…VYRSFEDIRE (91 aa)) folds into the ATP-cone domain.

It belongs to the NrdR family. The cofactor is Zn(2+).

Its function is as follows. Negatively regulates transcription of bacterial ribonucleotide reductase nrd genes and operons by binding to NrdR-boxes. The sequence is that of Transcriptional repressor NrdR from Pectobacterium atrosepticum (strain SCRI 1043 / ATCC BAA-672) (Erwinia carotovora subsp. atroseptica).